Here is a 1080-residue protein sequence, read N- to C-terminus: Carbamoyl phosphate synthase large chain (1080 aa).

The tract at residues 1–403 (MPKRTDLKTI…SLQKALRGLE (403 aa)) is carboxyphosphate synthetic domain. The ATP site is built by R129, R169, G175, G176, E208, V210, E215, G241, V242, H243, Q285, and E299. The 196-residue stretch at 133-328 (RVAMGEIGLD…IAKVAAKLAV (196 aa)) folds into the ATP-grasp 1 domain. Residues Q285, E299, and N301 each contribute to the Mg(2+) site. Residues Q285, E299, and N301 each contribute to the Mn(2+) site. The segment at 404–554 (TGKIGLDPTG…YSTYEDECEA (151 aa)) is oligomerization domain. The segment at 555 to 942 (LPSNRDKIMI…AFARAQEAGG (388 aa)) is carbamoyl phosphate synthetic domain. The 198-residue stretch at 679–876 (QQLVDKLGLK…LAKIAARCMA (198 aa)) folds into the ATP-grasp 2 domain. 10 residues coordinate ATP: R715, R754, L756, E761, G787, V788, H789, S790, Q830, and E847. Positions 830, 847, and 849 each coordinate Mg(2+). Mn(2+) is bound by residues Q830, E847, and N849. In terms of domain architecture, MGS-like spans 943-1080 (IKAPPLGKAF…LQELHKELEA (138 aa)). The allosteric domain stretch occupies residues 943 to 1080 (IKAPPLGKAF…LQELHKELEA (138 aa)).

It belongs to the CarB family. As to quaternary structure, composed of two chains; the small (or glutamine) chain promotes the hydrolysis of glutamine to ammonia, which is used by the large (or ammonia) chain to synthesize carbamoyl phosphate. Tetramer of heterodimers (alpha,beta)4. Mg(2+) is required as a cofactor. The cofactor is Mn(2+).

It catalyses the reaction hydrogencarbonate + L-glutamine + 2 ATP + H2O = carbamoyl phosphate + L-glutamate + 2 ADP + phosphate + 2 H(+). The enzyme catalyses hydrogencarbonate + NH4(+) + 2 ATP = carbamoyl phosphate + 2 ADP + phosphate + 2 H(+). Its pathway is amino-acid biosynthesis; L-arginine biosynthesis; carbamoyl phosphate from bicarbonate: step 1/1. It participates in pyrimidine metabolism; UMP biosynthesis via de novo pathway; (S)-dihydroorotate from bicarbonate: step 1/3. Functionally, large subunit of the glutamine-dependent carbamoyl phosphate synthetase (CPSase). CPSase catalyzes the formation of carbamoyl phosphate from the ammonia moiety of glutamine, carbonate, and phosphate donated by ATP, constituting the first step of 2 biosynthetic pathways, one leading to arginine and/or urea and the other to pyrimidine nucleotides. The large subunit (synthetase) binds the substrates ammonia (free or transferred from glutamine from the small subunit), hydrogencarbonate and ATP and carries out an ATP-coupled ligase reaction, activating hydrogencarbonate by forming carboxy phosphate which reacts with ammonia to form carbamoyl phosphate. The sequence is that of Carbamoyl phosphate synthase large chain from Xanthomonas campestris pv. campestris (strain ATCC 33913 / DSM 3586 / NCPPB 528 / LMG 568 / P 25).